The following is a 458-amino-acid chain: Monomethylamine methyltransferase MtmB1 (458 aa).

Residue O202 is a non-standard amino acid, pyrrolysine.

This sequence belongs to the monomethylamine methyltransferase family. Dimer of homotrimers. Can form a complex with MtmC (MtmC1 or MtmC2).

It carries out the reaction Co(I)-[methylamine-specific corrinoid protein] + methylamine + H(+) = methyl-Co(III)-[methylamine-specific corrinoid protein] + NH4(+). The protein operates within one-carbon metabolism; methanogenesis from methylamine. Functionally, catalyzes the transfer of the methyl group from monomethylamine to the corrinoid cofactor of MtmC (MtmC1 or MtmC2). This is Monomethylamine methyltransferase MtmB1 (mtmB1) from Methanosarcina barkeri.